Here is a 444-residue protein sequence, read N- to C-terminus: Na(+)/H(+) antiporter NhaA (444 aa).

11 helical membrane-spanning segments follow: residues 27–47 (TTGL…NSPL), 72–92 (IHHW…GLEI), 108–128 (MLPI…YYAI), 136–156 (AGWG…LVLL), 167–187 (FLVA…ALFY), 190–210 (EINM…VSFN), 212–232 (FGIH…LFML), 312–332 (HLPV…GVSI), 349–369 (VMAG…YLAI), 385–405 (VFGV…IAEL), and 419–439 (IGIL…LRFI).

Belongs to the NhaA Na(+)/H(+) (TC 2.A.33) antiporter family.

The protein localises to the cell inner membrane. It carries out the reaction Na(+)(in) + 2 H(+)(out) = Na(+)(out) + 2 H(+)(in). Na(+)/H(+) antiporter that extrudes sodium in exchange for external protons. This Sulfurimonas denitrificans (strain ATCC 33889 / DSM 1251) (Thiomicrospira denitrificans (strain ATCC 33889 / DSM 1251)) protein is Na(+)/H(+) antiporter NhaA.